A 375-amino-acid chain; its full sequence is Chaperone protein DnaJ (375 aa).

A J domain is found at 4-68; sequence DYYETLGVDR…ETRARYDQFG (65 aa). The CR-type zinc finger occupies 134–216; that stretch reads GGEKEIRIPH…CGGAGRKQET (83 aa). C147, C150, C164, C167, C190, C193, C204, and C207 together coordinate Zn(2+). CXXCXGXG motif repeat units follow at residues 147 to 154, 164 to 171, 190 to 197, and 204 to 211; these read CQVCNGSG, CSTCNGAG, CPDCNGAG, and CDACGGAG.

This sequence belongs to the DnaJ family. As to quaternary structure, homodimer. Zn(2+) is required as a cofactor.

It localises to the cytoplasm. Its function is as follows. Participates actively in the response to hyperosmotic and heat shock by preventing the aggregation of stress-denatured proteins and by disaggregating proteins, also in an autonomous, DnaK-independent fashion. Unfolded proteins bind initially to DnaJ; upon interaction with the DnaJ-bound protein, DnaK hydrolyzes its bound ATP, resulting in the formation of a stable complex. GrpE releases ADP from DnaK; ATP binding to DnaK triggers the release of the substrate protein, thus completing the reaction cycle. Several rounds of ATP-dependent interactions between DnaJ, DnaK and GrpE are required for fully efficient folding. Also involved, together with DnaK and GrpE, in the DNA replication of plasmids through activation of initiation proteins. In Rippkaea orientalis (strain PCC 8801 / RF-1) (Cyanothece sp. (strain PCC 8801)), this protein is Chaperone protein DnaJ.